We begin with the raw amino-acid sequence, 324 residues long: Glyoxylate/hydroxypyruvate reductase B (324 aa).

Residues R237 and E266 contribute to the active site. Residue H285 is the Proton donor of the active site.

Belongs to the D-isomer specific 2-hydroxyacid dehydrogenase family. GhrB subfamily. As to quaternary structure, homodimer.

The protein localises to the cytoplasm. It carries out the reaction glycolate + NADP(+) = glyoxylate + NADPH + H(+). The catalysed reaction is (R)-glycerate + NAD(+) = 3-hydroxypyruvate + NADH + H(+). The enzyme catalyses (R)-glycerate + NADP(+) = 3-hydroxypyruvate + NADPH + H(+). In terms of biological role, catalyzes the NADPH-dependent reduction of glyoxylate and hydroxypyruvate into glycolate and glycerate, respectively. This chain is Glyoxylate/hydroxypyruvate reductase B, found in Escherichia coli (strain SMS-3-5 / SECEC).